We begin with the raw amino-acid sequence, 200 residues long: Beta-1,6-glucan synthesis-associated protein KEG1 (200 aa).

Topologically, residues 1 to 15 (MAGIKLTHKLYQYYQ) are lumenal. The chain crosses the membrane as a helical span at residues 16–36 (LATSFLYAALLIRWLILMPLV). Residues 37-44 (GSRFLPGG) lie on the Cytoplasmic side of the membrane. The helical transmembrane segment at 45–65 (IHEFLIYLMFYSSIMEVIWLL) threads the bilayer. The Lumenal portion of the chain corresponds to 66–82 (RFHGFKYGLLSRTFLKD). The chain crosses the membrane as a helical span at residues 83 to 103 (LNFIYLVSVIHFYDDYEHALI). Topologically, residues 104–145 (LKNASYSSFIISLSLSQAYCHWCKLFKRKGVKERTLVWKVNT) are cytoplasmic. Residues 146–166 (FVTLPILYLSEFALLLLNIQV) traverse the membrane as a helical segment. Residues 167–173 (KNYHSTP) lie on the Lumenal side of the membrane. The helical transmembrane segment at 174–194 (TLDIINRVVLLAYFPVLLTAY) threads the bilayer. The Cytoplasmic segment spans residues 195–200 (KKLLTK).

In terms of assembly, interacts with KRE6.

It is found in the endoplasmic reticulum membrane. In terms of biological role, involved in the biosynthesis of (1-&gt;6)-beta-D-glucan polymers of the cell wall. Required for viability. Involved in maintaining chromosome stability. The sequence is that of Beta-1,6-glucan synthesis-associated protein KEG1 (KEG1) from Saccharomyces cerevisiae (strain ATCC 204508 / S288c) (Baker's yeast).